A 100-amino-acid polypeptide reads, in one-letter code: uncharacterized protein (100 aa).

The span at Asp-65–Pro-91 shows a compositional bias: basic and acidic residues. The segment at Asp-65–Lys-100 is disordered.

The protein belongs to the chlamydial CPn_0121/CT_031/TC_0300 family.

This is an uncharacterized protein from Chlamydia trachomatis serovar D (strain ATCC VR-885 / DSM 19411 / UW-3/Cx).